We begin with the raw amino-acid sequence, 223 residues long: Urease accessory protein UreF (223 aa).

The protein belongs to the UreF family. UreD, UreF and UreG form a complex that acts as a GTP-hydrolysis-dependent molecular chaperone, activating the urease apoprotein by helping to assemble the nickel containing metallocenter of UreC. The UreE protein probably delivers the nickel.

It is found in the cytoplasm. In terms of biological role, required for maturation of urease via the functional incorporation of the urease nickel metallocenter. The sequence is that of Urease accessory protein UreF from Pseudomonas aeruginosa (strain LESB58).